A 193-amino-acid polypeptide reads, in one-letter code: Bcl-2-like protein 2 (193 aa).

Ala2 carries the N-acetylalanine modification. Positions 9-29 match the BH4 motif; the sequence is DTRALVADFVGYKLRQKGYVC. The BH1 motif lies at 85–104; that stretch reads ELFQGGPNWGRLVAFFVFGA. A BH2 motif is present at residues 136-151; the sequence is DWIHSSGGWAEFTALY.

It belongs to the Bcl-2 family. As to quaternary structure, interacts with HIF3A isoform 2 (via C-terminus domain). Interacts with BOP. Expressed in almost all myeloid cell lines and in a wide range of tissues, with highest levels in brain, colon, and salivary gland.

It is found in the mitochondrion membrane. Its function is as follows. Promotes cell survival. Blocks dexamethasone-induced apoptosis. Mediates survival of postmitotic Sertoli cells by suppressing death-promoting activity of BAX. This is Bcl-2-like protein 2 (Bcl2l2) from Mus musculus (Mouse).